Reading from the N-terminus, the 353-residue chain is uncharacterized protein (353 aa).

Positions Met1–Ala23 are cleaved as a signal peptide.

It to E.coli YqiI.

Its function is as follows. May be involved in a fimbrial system chaperoned by YbgP and exported by YbgQ. This is an uncharacterized protein from Escherichia coli (strain K12).